Here is a 196-residue protein sequence, read N- to C-terminus: MHESSALSKLYNWDCSVVFIILNIYTTMLVLVTTGGTVPFEALIELVLSHESITTLSQLGFSKMRVQYGRGNRHIFTKHHKEGVMSITGFEYTDDLAGEMSRAHLVISHAGTGSVLDALRIGKHPVVVVNSKLMDNHQIEIAEELFRKRHLLVSGDTDSVGFIKALKMHREYLFETLPDPEEGILQRIIEETVSFM.

This sequence belongs to the glycosyltransferase 28 family. Heterodimer with ALG14 to form a functional enzyme.

Its subcellular location is the endoplasmic reticulum. It catalyses the reaction an N-acetyl-alpha-D-glucosaminyl-diphospho-di-trans,poly-cis-dolichol + UDP-N-acetyl-alpha-D-glucosamine = an N,N'-diacetylchitobiosyl-diphospho-di-trans,poly-cis-dolichol + UDP + H(+). Functionally, involved in protein N-glycosylation. Essential for the second step of the dolichol-linked oligosaccharide pathway. The protein is UDP-N-acetylglucosamine transferase subunit ALG13 (ALG13) of Yarrowia lipolytica (strain CLIB 122 / E 150) (Yeast).